We begin with the raw amino-acid sequence, 309 residues long: MKIVFMGTPEFAVPSLKAMVENFNVEGVFTQPDRPKGRGKKLAMSPVKEVALENNIDVYQPVSLRKEPEFIEKLKNIQPDFIIVVAYGQILPKEVLEIPKYACINLHASLLPKYRGAAPLNWAIINGEKKSGNTTMLMDVGLDTGDMLMTQEVDINDSMTAGELHDILMIQGGDLLVDTINKMVSGEITPIKQDDSKTCYASMLDKKMACIDWSKSASEIHNLIRGLNPWPVAYTHYDDKVMKIYKSHVLNENSKKEPGTVINVSNKGIKVACGEGILVVEEIQFPGKKPLKVEQYIRGNSIEIESVLK.

Residue 109–112 coordinates (6S)-5,6,7,8-tetrahydrofolate; that stretch reads SLLP.

It belongs to the Fmt family.

The enzyme catalyses L-methionyl-tRNA(fMet) + (6R)-10-formyltetrahydrofolate = N-formyl-L-methionyl-tRNA(fMet) + (6S)-5,6,7,8-tetrahydrofolate + H(+). In terms of biological role, attaches a formyl group to the free amino group of methionyl-tRNA(fMet). The formyl group appears to play a dual role in the initiator identity of N-formylmethionyl-tRNA by promoting its recognition by IF2 and preventing the misappropriation of this tRNA by the elongation apparatus. This is Methionyl-tRNA formyltransferase from Clostridium novyi (strain NT).